Consider the following 656-residue polypeptide: Threonine--tRNA ligase (656 aa).

Residues 1-63 enclose the TGS domain; sequence MAEIQLTFPD…LEDGAIEIIT (63 aa). The interval 243 to 541 is catalytic; sequence DHRVIGNQLD…LTEIYKGAFP (299 aa). Zn(2+) contacts are provided by Cys337, His388, and His518.

This sequence belongs to the class-II aminoacyl-tRNA synthetase family. In terms of assembly, homodimer. Zn(2+) is required as a cofactor.

The protein resides in the cytoplasm. It catalyses the reaction tRNA(Thr) + L-threonine + ATP = L-threonyl-tRNA(Thr) + AMP + diphosphate + H(+). Its function is as follows. Catalyzes the attachment of threonine to tRNA(Thr) in a two-step reaction: L-threonine is first activated by ATP to form Thr-AMP and then transferred to the acceptor end of tRNA(Thr). Also edits incorrectly charged L-seryl-tRNA(Thr). This is Threonine--tRNA ligase from Latilactobacillus sakei subsp. sakei (strain 23K) (Lactobacillus sakei subsp. sakei).